The following is a 319-amino-acid chain: Very-long-chain 3-oxoacyl-CoA reductase-A (319 aa).

The helical transmembrane segment at 17–37 threads the bilayer; sequence LFWVGALITASLALYVVYKTI. Residue 56 to 85 coordinates NADP(+); that stretch reads GKWAVVTGATDGIGKSYAEELARRGFSMML. Transmembrane regions (helical) follow at residues 188–208 and 282–302; these read GVILNISSASGMFPVPLLTIY and AVMGWVTTILAPIDLVLNLGL. Residue serine 195 coordinates substrate. Tyrosine 208 (proton acceptor) is an active-site residue.

It belongs to the short-chain dehydrogenases/reductases (SDR) family. 17-beta-HSD 3 subfamily.

Its subcellular location is the endoplasmic reticulum membrane. It catalyses the reaction a very-long-chain (3R)-3-hydroxyacyl-CoA + NADP(+) = a very-long-chain 3-oxoacyl-CoA + NADPH + H(+). It carries out the reaction 17beta-estradiol + NAD(+) = estrone + NADH + H(+). The catalysed reaction is 17beta-estradiol + NADP(+) = estrone + NADPH + H(+). Its pathway is lipid metabolism; fatty acid biosynthesis. It functions in the pathway steroid biosynthesis; estrogen biosynthesis. Functionally, catalyzes the second of the four reactions of the long-chain fatty acids elongation cycle. This endoplasmic reticulum-bound enzymatic process, allows the addition of two carbons to the chain of long- and very long-chain fatty acids/VLCFAs per cycle. This enzyme has a 3-ketoacyl-CoA reductase activity, reducing 3-ketoacyl-CoA to 3-hydroxyacyl-CoA, within each cycle of fatty acid elongation. Thereby, it may participate in the production of VLCFAs of different chain lengths that are involved in multiple biological processes as precursors of membrane lipids and lipid mediators. May also catalyze the transformation of estrone (E1) into estradiol (E2) and play a role in estrogen formation. The sequence is that of Very-long-chain 3-oxoacyl-CoA reductase-A (hsd17b12a) from Danio rerio (Zebrafish).